The sequence spans 151 residues: Small ribosomal subunit protein uS11 (151 aa).

Residues Asp131–Leu151 are disordered. Residues Arg142–Leu151 show a composition bias toward basic residues.

It belongs to the universal ribosomal protein uS11 family.

The protein is Small ribosomal subunit protein uS11 of Bombyx mori (Silk moth).